Here is a 464-residue protein sequence, read N- to C-terminus: ATP-dependent protease ATPase subunit HslU (464 aa).

Residues Val-18, 60–65 (GVGKTE), Asp-277, Glu-342, and Arg-414 contribute to the ATP site.

The protein belongs to the ClpX chaperone family. HslU subfamily. A double ring-shaped homohexamer of HslV is capped on each side by a ring-shaped HslU homohexamer. The assembly of the HslU/HslV complex is dependent on binding of ATP.

Its subcellular location is the cytoplasm. Its function is as follows. ATPase subunit of a proteasome-like degradation complex; this subunit has chaperone activity. The binding of ATP and its subsequent hydrolysis by HslU are essential for unfolding of protein substrates subsequently hydrolyzed by HslV. HslU recognizes the N-terminal part of its protein substrates and unfolds these before they are guided to HslV for hydrolysis. The chain is ATP-dependent protease ATPase subunit HslU from Lactobacillus delbrueckii subsp. bulgaricus (strain ATCC BAA-365 / Lb-18).